The sequence spans 814 residues: Spore development regulator umv1 (814 aa).

Disordered stretches follow at residues 1–36 (MSRP…GSTE), 96–134 (HDRP…VRRG), 267–333 (QGLK…MPRS), 407–441 (PPRD…RAGP), 457–501 (PVRS…ASLT), and 539–814 (QSSG…NQPY). Polar residues predominate over residues 7-18 (RSGNASTPQGTS). Residues 53–274 (RDHIEYQLTV…AEQGLKVRVR (222 aa)) form the Velvet domain. The span at 271–285 (VRVRKHPRSRRRGSK) shows a compositional bias: basic residues. A compositionally biased stretch (basic and acidic residues) spans 407 to 423 (PPRDFADGRYMDGDYPP). Residues 438 to 445 (RAGPSEYS) carry the Nuclear localization signal motif. Positions 620–631 (AAARRSPIPSAR) are enriched in low complexity. Composition is skewed to basic and acidic residues over residues 723–741 (TRDR…DRDQ) and 760–796 (GELD…RRDF). Polar residues predominate over residues 800 to 814 (TMPSKPSSRGHNQPY).

Belongs to the velvet family. VosA subfamily. As to quaternary structure, forms a heterodimeric complex with velB; the formation of the VEL2-VOS1 complex is light-dependent.

It is found in the nucleus. In terms of biological role, component of the velB-VosA heterodimeric complex that plays a dual role in activating genes associated with spore maturation and repressing certain development-associated genes. The complex binds DNA through the DNA-binding domain of vosA that recognizes an 11-nucleotide consensus sequence 5'-CTGGCCGCGGC-3' consisting of two motifs in the promoters of key developmental regulatory genes. Required for gall induction and teliospore formation on seedlings. This Mycosarcoma maydis (Corn smut fungus) protein is Spore development regulator umv1.